The following is a 96-amino-acid chain: uncharacterized protein (96 aa).

The next 3 membrane-spanning stretches (helical) occupy residues 2–22 (FIFNVLTIRCTFHVLFAICYF), 38–58 (AGLKIFLVFELAVTIFNTVML), and 68–88 (LTLAILIVSVVMFVYHQQLIV).

Its subcellular location is the membrane. This is an uncharacterized protein from Schizosaccharomyces pombe (strain 972 / ATCC 24843) (Fission yeast).